A 379-amino-acid chain; its full sequence is Glucose-1-phosphate adenylyltransferase (379 aa).

Residues glycine 164, 179–180 (EK), and serine 190 each bind alpha-D-glucose 1-phosphate.

The protein belongs to the bacterial/plant glucose-1-phosphate adenylyltransferase family. In terms of assembly, homotetramer.

It catalyses the reaction alpha-D-glucose 1-phosphate + ATP + H(+) = ADP-alpha-D-glucose + diphosphate. It participates in glycan biosynthesis; glycogen biosynthesis. Functionally, involved in the biosynthesis of ADP-glucose, a building block required for the elongation reactions to produce glycogen. Catalyzes the reaction between ATP and alpha-D-glucose 1-phosphate (G1P) to produce pyrophosphate and ADP-Glc. This Streptococcus agalactiae serotype Ia (strain ATCC 27591 / A909 / CDC SS700) protein is Glucose-1-phosphate adenylyltransferase.